Consider the following 478-residue polypeptide: Protein nucleotidyltransferase YdiU (478 aa).

Positions 84, 86, 87, 107, 119, 120, 170, and 177 each coordinate ATP. Residue Asp-246 is the Proton acceptor of the active site. Asn-247 and Asp-256 together coordinate Mg(2+). An ATP-binding site is contributed by Asp-256.

Belongs to the SELO family. Mg(2+) serves as cofactor. The cofactor is Mn(2+).

The catalysed reaction is L-seryl-[protein] + ATP = 3-O-(5'-adenylyl)-L-seryl-[protein] + diphosphate. The enzyme catalyses L-threonyl-[protein] + ATP = 3-O-(5'-adenylyl)-L-threonyl-[protein] + diphosphate. It catalyses the reaction L-tyrosyl-[protein] + ATP = O-(5'-adenylyl)-L-tyrosyl-[protein] + diphosphate. It carries out the reaction L-histidyl-[protein] + UTP = N(tele)-(5'-uridylyl)-L-histidyl-[protein] + diphosphate. The catalysed reaction is L-seryl-[protein] + UTP = O-(5'-uridylyl)-L-seryl-[protein] + diphosphate. The enzyme catalyses L-tyrosyl-[protein] + UTP = O-(5'-uridylyl)-L-tyrosyl-[protein] + diphosphate. Its function is as follows. Nucleotidyltransferase involved in the post-translational modification of proteins. It can catalyze the addition of adenosine monophosphate (AMP) or uridine monophosphate (UMP) to a protein, resulting in modifications known as AMPylation and UMPylation. This chain is Protein nucleotidyltransferase YdiU, found in Shigella sonnei (strain Ss046).